A 199-amino-acid chain; its full sequence is Probable GTP-binding protein EngB (199 aa).

In terms of domain architecture, EngB-type G spans 28–199 (DLPEIALAGR…ESWDTILEYL (172 aa)). GTP contacts are provided by residues 36–43 (GRSNVGKS), 63–67 (GKTQL), 81–84 (DVPG), 148–151 (TKAD), and 180–182 (FSS). Residues Ser43 and Thr65 each coordinate Mg(2+).

It belongs to the TRAFAC class TrmE-Era-EngA-EngB-Septin-like GTPase superfamily. EngB GTPase family. Mg(2+) is required as a cofactor.

Necessary for normal cell division and for the maintenance of normal septation. This chain is Probable GTP-binding protein EngB, found in Streptococcus equi subsp. equi (strain 4047).